A 334-amino-acid chain; its full sequence is Probable 2-ketogluconate reductase (334 aa).

NAD(+) is bound by residues 164-165, 244-246, and Asp-270; these read RI and AGR. Arg-246 is an active-site residue. The active site involves Glu-275. His-294 serves as the catalytic Proton donor. 294–297 serves as a coordination point for NAD(+); the sequence is HIGT.

This sequence belongs to the D-isomer specific 2-hydroxyacid dehydrogenase family.

It is found in the cytoplasm. It catalyses the reaction D-gluconate + NADP(+) = 2-dehydro-D-gluconate + NADPH + H(+). Catalyzes the NADPH-dependent reduction of 2,5-diketo-D-gluconate (25DKG) to 5-keto-D-gluconate (5KDG), 2-keto-D-gluconate (2KDG) to D-gluconate, and 2-keto-L-gulonate (2KLG) to L-idonate (IA). This is Probable 2-ketogluconate reductase (tkrA) from Dictyostelium discoideum (Social amoeba).